We begin with the raw amino-acid sequence, 110 residues long: UPF0122 protein SaurJH9_1295 (110 aa).

It belongs to the UPF0122 family.

Might take part in the signal recognition particle (SRP) pathway. This is inferred from the conservation of its genetic proximity to ftsY/ffh. May be a regulatory protein. This is UPF0122 protein SaurJH9_1295 from Staphylococcus aureus (strain JH9).